The following is a 245-amino-acid chain: tRNA1(Val) (adenine(37)-N6)-methyltransferase (245 aa).

Belongs to the methyltransferase superfamily. tRNA (adenine-N(6)-)-methyltransferase family.

It is found in the cytoplasm. The enzyme catalyses adenosine(37) in tRNA1(Val) + S-adenosyl-L-methionine = N(6)-methyladenosine(37) in tRNA1(Val) + S-adenosyl-L-homocysteine + H(+). Functionally, specifically methylates the adenine in position 37 of tRNA(1)(Val) (anticodon cmo5UAC). The chain is tRNA1(Val) (adenine(37)-N6)-methyltransferase (yfiC) from Escherichia coli (strain K12).